The primary structure comprises 195 residues: Penicillin-binding protein activator LpoB (195 aa).

The signal sequence occupies residues 1-16; sequence MKKYLFVALAALVLTG. Residue cysteine 17 is the site of N-palmitoyl cysteine attachment. Cysteine 17 carries S-diacylglycerol cysteine lipidation. A disordered region spans residues 19 to 55; sequence SRPPEPEQPQPPVTVEPVTPPVVEEPQPPVTEPVPQP. Composition is skewed to pro residues over residues 24–38 and 44–55; these read PEQP…PVTP and PQPPVTEPVPQP.

The protein belongs to the LpoB family. Interacts with PBP1b.

Its subcellular location is the cell outer membrane. In terms of biological role, regulator of peptidoglycan synthesis that is essential for the function of penicillin-binding protein 1B (PBP1b). In Serratia proteamaculans (strain 568), this protein is Penicillin-binding protein activator LpoB.